A 106-amino-acid chain; its full sequence is Large ribosomal subunit protein eL42 (106 aa).

Residues 36–56 (FAQGKRRYDRKQSGYGGQTKP) are disordered.

The protein belongs to the eukaryotic ribosomal protein eL42 family.

This is Large ribosomal subunit protein eL42 (RPL44) from Phaffia rhodozyma (Yeast).